A 1772-amino-acid polypeptide reads, in one-letter code: Merozoite surface protein 1 (1772 aa).

The N-terminal stretch at 1–18 is a signal peptide; it reads MKVIGLLFSFVFFAIKCK. An N-linked (GlcNAc...) asparagine glycan is attached at Asn-54. The segment at 290 to 319 is disordered; it reads TGGQSSTEPGSGGSSASGTSSSGQASAGTG. The segment covering 305 to 319 has biased composition (low complexity); it reads ASGTSSSGQASAGTG. Asn-406 and Asn-646 each carry an N-linked (GlcNAc...) asparagine glycan. Positions 703–796 are disordered; it reads KERMEQGPAI…QPSQAASSTT (94 aa). Over residues 724–796 the composition is skewed to low complexity; the sequence is SAESSTDRST…QPSQAASSTT (73 aa). The N-linked (GlcNAc...) asparagine glycan is linked to Asn-829. Positions 924-1070 are disordered; the sequence is AAPTPVTPAA…SRAESEEDMP (147 aa). Composition is skewed to low complexity over residues 930–946 and 956–1052; these read TPAA…PDVQ and SQQP…NSQS. N-linked (GlcNAc...) asparagine glycans are attached at residues Asn-1018 and Asn-1090. The tract at residues 1362 to 1383 is disordered; that stretch reads GAVPGSGTDTRVAGSSVDDNED. Asn-1408, Asn-1446, Asn-1541, and Asn-1629 each carry an N-linked (GlcNAc...) asparagine glycan. EGF-like domains are found at residues 1661–1703 and 1704–1752; these read HVCV…VENN and NPTC…FCSS. An intrachain disulfide couples Cys-1663 to Cys-1675. N-linked (GlcNAc...) asparagine glycosylation is present at Asn-1680. Cystine bridges form between Cys-1687–Cys-1699, Cys-1707–Cys-1720, Cys-1714–Cys-1734, and Cys-1736–Cys-1750. Residue Ser-1751 is the site of GPI-anchor amidated serine attachment. A propeptide spans 1752 to 1772 (removed in mature form); sequence SSSFMGLSILLIITLIVFNIF.

Forms a complex composed of subunits p83, p30, p38, and p42 which remain non-covalently associated; the complex is formed at the merozoite surface prior to egress from host erythrocytes. The p230 precursor is cleaved by SUB1 prior to merozoite egress into 4 subunits p83, p30, p38, and p42 which remain non-covalently associated. In a second processing step during erythrocyte invasion, p42 is cleaved by SUB2 into p33 and p19; the latter remains attached to the merozoite surface via its GPI-anchor and stays on the surface during the subsequent ring stage.

The protein resides in the cell membrane. It localises to the secreted. During the asexual blood stage, involved in merozoite egress from host erythrocytes possibly via its interaction with the host cytoskeleton protein spectrin resulting in the destabilization of the host cytoskeleton and thus leading to erythrocyte cell membrane rupture. Involved in the binding to host erythrocytes and is required for host erythrocyte invasion. This Plasmodium yoelii yoelii protein is Merozoite surface protein 1.